The sequence spans 545 residues: MKKRILVTCAFPYANGSLHIGHFLEHIQADIWVRYKKMRGHEVWFICADDAHGTPIMLKSQSLKMSPESFISDIYKDHVNDLEKFNINYDNYYSTHSSENSYFLKKIYHILDKKGLIQTRNIFQLFDNTKRVFLPDRFVKGACPICHTKDQYGDHCEVCGSSYSAVELIKPVSMLSGNCPILKKSLHFFFNLPYFESMLRSWVMSGVLQASVVKKLDEWFKLGLREWDISRDSPYFGFNIPGFLDKYFYVWLDAPIGYISTFKNLCTQRNNLNFLDFWKKNSECELYQFIGKDIVYFHSLFWPSILEASNFRKPTKIFVHGHVTINGLKLSKSRGDCILAKNWIKNLDSDSLRYYYASKLSSKIQDIEVNAKHFLYKINSDVVNKIVNLASRVSSFINIYFNNELSSRIDDLALYKRFVTSSSYIEKMLENCEFNSAISMVISLADIANSYVDNKKPWNLTKNIKNSNTLHDICTTVLNLFRILMTWLKPVMPDLAKNSEKFLNIKLEWANICIPLLNHKISIFKALRHRIEDKQIKFLLPNNFE.

A 'HIGH' region motif is present at residues 12 to 22 (PYANGSLHIGH). 4 residues coordinate Zn(2+): cysteine 143, cysteine 146, cysteine 156, and cysteine 159. The short motif at 329-333 (KLSKS) is the 'KMSKS' region element. Lysine 332 lines the ATP pocket.

The protein belongs to the class-I aminoacyl-tRNA synthetase family. MetG type 1 subfamily. As to quaternary structure, monomer. The cofactor is Zn(2+).

The protein resides in the cytoplasm. The enzyme catalyses tRNA(Met) + L-methionine + ATP = L-methionyl-tRNA(Met) + AMP + diphosphate. Is required not only for elongation of protein synthesis but also for the initiation of all mRNA translation through initiator tRNA(fMet) aminoacylation. The chain is Methionine--tRNA ligase (metG) from Buchnera aphidicola subsp. Baizongia pistaciae (strain Bp).